A 343-amino-acid chain; its full sequence is 3-dehydroquinate synthase (343 aa).

Residues 86 to 90, 110 to 111, K123, and K132 each bind NAD(+); these read GALLD and TT. Residues E165, H229, and H243 each contribute to the Zn(2+) site.

It belongs to the sugar phosphate cyclases superfamily. Dehydroquinate synthase family. It depends on Co(2+) as a cofactor. The cofactor is Zn(2+). NAD(+) serves as cofactor.

Its subcellular location is the cytoplasm. It catalyses the reaction 7-phospho-2-dehydro-3-deoxy-D-arabino-heptonate = 3-dehydroquinate + phosphate. Its pathway is metabolic intermediate biosynthesis; chorismate biosynthesis; chorismate from D-erythrose 4-phosphate and phosphoenolpyruvate: step 2/7. Its function is as follows. Catalyzes the conversion of 3-deoxy-D-arabino-heptulosonate 7-phosphate (DAHP) to dehydroquinate (DHQ). The chain is 3-dehydroquinate synthase from Pyrobaculum islandicum (strain DSM 4184 / JCM 9189 / GEO3).